The chain runs to 177 residues: ATP synthase subunit delta 1 (177 aa).

Belongs to the ATPase delta chain family. As to quaternary structure, F-type ATPases have 2 components, F(1) - the catalytic core - and F(0) - the membrane proton channel. F(1) has five subunits: alpha(3), beta(3), gamma(1), delta(1), epsilon(1). F(0) has three main subunits: a(1), b(2) and c(10-14). The alpha and beta chains form an alternating ring which encloses part of the gamma chain. F(1) is attached to F(0) by a central stalk formed by the gamma and epsilon chains, while a peripheral stalk is formed by the delta and b chains.

It localises to the cell inner membrane. F(1)F(0) ATP synthase produces ATP from ADP in the presence of a proton or sodium gradient. F-type ATPases consist of two structural domains, F(1) containing the extramembraneous catalytic core and F(0) containing the membrane proton channel, linked together by a central stalk and a peripheral stalk. During catalysis, ATP synthesis in the catalytic domain of F(1) is coupled via a rotary mechanism of the central stalk subunits to proton translocation. Functionally, this protein is part of the stalk that links CF(0) to CF(1). It either transmits conformational changes from CF(0) to CF(1) or is implicated in proton conduction. In Vibrio atlanticus (strain LGP32) (Vibrio splendidus (strain Mel32)), this protein is ATP synthase subunit delta 1.